Reading from the N-terminus, the 766-residue chain is Signal transducer and activator of transcription 3.2 (766 aa).

The short motif at Asp-150–Met-162 is the Essential for nuclear import element. The SH2 domain occupies Trp-580 to Leu-670. Position 725 is a phosphoserine; by NLK (Ser-725).

The protein belongs to the transcription factor STAT family. As to quaternary structure, forms a homodimer or a heterodimer with a related family member. Interacts with nlk.2. In terms of processing, phosphorylation of both tyrosine and serine residues, together with dimerization, is required for mesoderm induction.

It is found in the cytoplasm. It localises to the nucleus. Functionally, transcription factor that binds to target promoter sequences and activates transcription upon il6st/gp130 stimulation. Mediates ventralization of embryos, at least in part via inhibition of smad2 signaling. Required for hairy2 to induce dll1/delta1 and promote neural crest cell proliferation and differentiation. Involved in TGFbeta-mediated mesoderm induction in early embryos, acting downstream of map3k7/tak1 and nlk.2. The protein is Signal transducer and activator of transcription 3.2 (stat3.2) of Xenopus laevis (African clawed frog).